Consider the following 125-residue polypeptide: Large ribosomal subunit protein bL12 (125 aa).

Belongs to the bacterial ribosomal protein bL12 family. As to quaternary structure, homodimer. Part of the ribosomal stalk of the 50S ribosomal subunit. Forms a multimeric L10(L12)X complex, where L10 forms an elongated spine to which 2 to 4 L12 dimers bind in a sequential fashion. Binds GTP-bound translation factors.

Forms part of the ribosomal stalk which helps the ribosome interact with GTP-bound translation factors. Is thus essential for accurate translation. The polypeptide is Large ribosomal subunit protein bL12 (Azorhizobium caulinodans (strain ATCC 43989 / DSM 5975 / JCM 20966 / LMG 6465 / NBRC 14845 / NCIMB 13405 / ORS 571)).